Reading from the N-terminus, the 341-residue chain is tRNA N6-adenosine threonylcarbamoyltransferase (341 aa).

Fe cation-binding residues include His-111 and His-115. Substrate-binding positions include 134 to 138 (LVSGG), Asp-167, Gly-180, and Asn-276. Position 304 (Asp-304) interacts with Fe cation.

The protein belongs to the KAE1 / TsaD family. The cofactor is Fe(2+).

The protein localises to the cytoplasm. The catalysed reaction is L-threonylcarbamoyladenylate + adenosine(37) in tRNA = N(6)-L-threonylcarbamoyladenosine(37) in tRNA + AMP + H(+). Required for the formation of a threonylcarbamoyl group on adenosine at position 37 (t(6)A37) in tRNAs that read codons beginning with adenine. Is involved in the transfer of the threonylcarbamoyl moiety of threonylcarbamoyl-AMP (TC-AMP) to the N6 group of A37, together with TsaE and TsaB. TsaD likely plays a direct catalytic role in this reaction. The chain is tRNA N6-adenosine threonylcarbamoyltransferase from Pseudomonas putida (strain ATCC 47054 / DSM 6125 / CFBP 8728 / NCIMB 11950 / KT2440).